The following is a 215-amino-acid chain: Ribosomal RNA small subunit methyltransferase G (215 aa).

S-adenosyl-L-methionine is bound by residues Gly-82, Met-87, 133–134 (VE), and Arg-148.

It belongs to the methyltransferase superfamily. RNA methyltransferase RsmG family.

It is found in the cytoplasm. It catalyses the reaction guanosine(527) in 16S rRNA + S-adenosyl-L-methionine = N(7)-methylguanosine(527) in 16S rRNA + S-adenosyl-L-homocysteine. In terms of biological role, specifically methylates the N7 position of guanine in position 527 of 16S rRNA. The polypeptide is Ribosomal RNA small subunit methyltransferase G (Stutzerimonas stutzeri (strain A1501) (Pseudomonas stutzeri)).